The sequence spans 327 residues: GTPase Obg (327 aa).

One can recognise an Obg domain in the interval 1–159 (MQFIDQANII…WEVQLELKLL (159 aa)). The 168-residue stretch at 160–327 (AEVGIIGLPN…SLLSEVWNRI (168 aa)) folds into the OBG-type G domain. Residues 166 to 173 (GLPNAGKS), 191 to 195 (FTTLI), 213 to 216 (DIPG), 280 to 283 (NKKE), and 309 to 311 (SSA) each bind ATP. The Mg(2+) site is built by serine 173 and threonine 193.

It belongs to the TRAFAC class OBG-HflX-like GTPase superfamily. OBG GTPase family. As to quaternary structure, monomer. Requires Mg(2+) as cofactor.

The protein localises to the cytoplasm. An essential GTPase which binds GTP, GDP and possibly (p)ppGpp with moderate affinity, with high nucleotide exchange rates and a fairly low GTP hydrolysis rate. Plays a role in control of the cell cycle, stress response, ribosome biogenesis and in those bacteria that undergo differentiation, in morphogenesis control. In Prochlorococcus marinus (strain MIT 9515), this protein is GTPase Obg.